The primary structure comprises 264 residues: GTP cyclohydrolase FolE2 (264 aa).

The protein belongs to the GTP cyclohydrolase IV family.

The enzyme catalyses GTP + H2O = 7,8-dihydroneopterin 3'-triphosphate + formate + H(+). The protein operates within cofactor biosynthesis; 7,8-dihydroneopterin triphosphate biosynthesis; 7,8-dihydroneopterin triphosphate from GTP: step 1/1. Converts GTP to 7,8-dihydroneopterin triphosphate. This Ruthia magnifica subsp. Calyptogena magnifica protein is GTP cyclohydrolase FolE2.